A 153-amino-acid chain; its full sequence is Phosphopantetheine adenylyltransferase (153 aa).

Ser11 lines the substrate pocket. ATP is bound by residues 11 to 12 (SF) and His19. Positions 43, 75, and 89 each coordinate substrate. Residues 90-92 (GIR), Glu100, and 124-130 (LSFISSS) each bind ATP.

Belongs to the bacterial CoaD family. In terms of assembly, homohexamer. Mg(2+) is required as a cofactor.

It is found in the cytoplasm. The catalysed reaction is (R)-4'-phosphopantetheine + ATP + H(+) = 3'-dephospho-CoA + diphosphate. Its pathway is cofactor biosynthesis; coenzyme A biosynthesis; CoA from (R)-pantothenate: step 4/5. Its function is as follows. Reversibly transfers an adenylyl group from ATP to 4'-phosphopantetheine, yielding dephospho-CoA (dPCoA) and pyrophosphate. The polypeptide is Phosphopantetheine adenylyltransferase (Porphyromonas gingivalis (strain ATCC 33277 / DSM 20709 / CIP 103683 / JCM 12257 / NCTC 11834 / 2561)).